The primary structure comprises 97 residues: Cell division topological specificity factor (97 aa).

It belongs to the MinE family.

Prevents the cell division inhibition by proteins MinC and MinD at internal division sites while permitting inhibition at polar sites. This ensures cell division at the proper site by restricting the formation of a division septum at the midpoint of the long axis of the cell. The sequence is that of Cell division topological specificity factor from Rhodospirillum centenum (strain ATCC 51521 / SW).